A 493-amino-acid chain; its full sequence is Probable cytosol aminopeptidase (493 aa).

Residues lysine 262 and aspartate 267 each coordinate Mn(2+). Residue lysine 274 is part of the active site. Mn(2+) is bound by residues aspartate 285, aspartate 344, and glutamate 346. Arginine 348 is an active-site residue.

The protein belongs to the peptidase M17 family. Requires Mn(2+) as cofactor.

It is found in the cytoplasm. It catalyses the reaction Release of an N-terminal amino acid, Xaa-|-Yaa-, in which Xaa is preferably Leu, but may be other amino acids including Pro although not Arg or Lys, and Yaa may be Pro. Amino acid amides and methyl esters are also readily hydrolyzed, but rates on arylamides are exceedingly low.. The enzyme catalyses Release of an N-terminal amino acid, preferentially leucine, but not glutamic or aspartic acids.. Presumably involved in the processing and regular turnover of intracellular proteins. Catalyzes the removal of unsubstituted N-terminal amino acids from various peptides. In Xanthomonas campestris pv. campestris (strain 8004), this protein is Probable cytosol aminopeptidase.